Here is a 193-residue protein sequence, read N- to C-terminus: Ribose 1,5-bisphosphate phosphokinase PhnN (193 aa).

9 to 16 (GPSGAGKD) lines the ATP pocket.

The protein belongs to the ribose 1,5-bisphosphokinase family.

It catalyses the reaction alpha-D-ribose 1,5-bisphosphate + ATP = 5-phospho-alpha-D-ribose 1-diphosphate + ADP. The protein operates within metabolic intermediate biosynthesis; 5-phospho-alpha-D-ribose 1-diphosphate biosynthesis; 5-phospho-alpha-D-ribose 1-diphosphate from D-ribose 5-phosphate (route II): step 3/3. Catalyzes the phosphorylation of ribose 1,5-bisphosphate to 5-phospho-D-ribosyl alpha-1-diphosphate (PRPP). The sequence is that of Ribose 1,5-bisphosphate phosphokinase PhnN from Yersinia pestis.